Here is a 270-residue protein sequence, read N- to C-terminus: Cytosolic Fe-S cluster assembly factor NUBP2 homolog (270 aa).

ATP is bound at residue 21–28 (GKGGVGKS). [4Fe-4S] cluster-binding residues include cysteine 195 and cysteine 198.

Belongs to the Mrp/NBP35 ATP-binding proteins family. NUBP2/CFD1 subfamily. In terms of assembly, heterotetramer of 2 NUBP1 and 2 NUBP2 chains. [4Fe-4S] cluster serves as cofactor.

The protein resides in the cytoplasm. Functionally, component of the cytosolic iron-sulfur (Fe/S) protein assembly (CIA) machinery. Required for maturation of extramitochondrial Fe-S proteins. The NUBP1-NUBP2 heterotetramer forms a Fe-S scaffold complex, mediating the de novo assembly of an Fe-S cluster and its transfer to target apoproteins. In Nematostella vectensis (Starlet sea anemone), this protein is Cytosolic Fe-S cluster assembly factor NUBP2 homolog.